Reading from the N-terminus, the 334-residue chain is Nucleoid-associated protein VS_0951 (334 aa).

It belongs to the YejK family.

The protein resides in the cytoplasm. The protein localises to the nucleoid. This chain is Nucleoid-associated protein VS_0951, found in Vibrio atlanticus (strain LGP32) (Vibrio splendidus (strain Mel32)).